Reading from the N-terminus, the 199-residue chain is Ribosomal RNA large subunit methyltransferase E (199 aa).

Residues Gly-53, Trp-55, Asp-73, Asp-92, and Asp-114 each contribute to the S-adenosyl-L-methionine site. Lys-154 functions as the Proton acceptor in the catalytic mechanism.

This sequence belongs to the class I-like SAM-binding methyltransferase superfamily. RNA methyltransferase RlmE family.

The protein resides in the cytoplasm. The catalysed reaction is uridine(2552) in 23S rRNA + S-adenosyl-L-methionine = 2'-O-methyluridine(2552) in 23S rRNA + S-adenosyl-L-homocysteine + H(+). Functionally, specifically methylates the uridine in position 2552 of 23S rRNA at the 2'-O position of the ribose in the fully assembled 50S ribosomal subunit. The polypeptide is Ribosomal RNA large subunit methyltransferase E (Treponema denticola (strain ATCC 35405 / DSM 14222 / CIP 103919 / JCM 8153 / KCTC 15104)).